Reading from the N-terminus, the 431-residue chain is Enolase (431 aa).

Gln167 provides a ligand contact to (2R)-2-phosphoglycerate. Glu209 functions as the Proton donor in the catalytic mechanism. Mg(2+) contacts are provided by Asp246, Glu289, and Asp316. Lys341, Arg370, Ser371, and Lys392 together coordinate (2R)-2-phosphoglycerate. The Proton acceptor role is filled by Lys341.

This sequence belongs to the enolase family. In terms of assembly, component of the RNA degradosome, a multiprotein complex involved in RNA processing and mRNA degradation. Mg(2+) is required as a cofactor.

The protein localises to the cytoplasm. It localises to the secreted. Its subcellular location is the cell surface. The enzyme catalyses (2R)-2-phosphoglycerate = phosphoenolpyruvate + H2O. It functions in the pathway carbohydrate degradation; glycolysis; pyruvate from D-glyceraldehyde 3-phosphate: step 4/5. In terms of biological role, catalyzes the reversible conversion of 2-phosphoglycerate (2-PG) into phosphoenolpyruvate (PEP). It is essential for the degradation of carbohydrates via glycolysis. The chain is Enolase from Shewanella halifaxensis (strain HAW-EB4).